The chain runs to 353 residues: Putative glycosyltransferase TagX (353 aa).

This sequence belongs to the glycosyltransferase 2 family.

The chain is Putative glycosyltransferase TagX (tagX) from Staphylococcus aureus (strain Mu50 / ATCC 700699).